Here is a 164-residue protein sequence, read N- to C-terminus: NADH-quinone oxidoreductase subunit I 2 (164 aa).

4Fe-4S ferredoxin-type domains follow at residues 39–71 (IVLTRDPDGQERCVACNLCAAACPVDCIDVVKA) and 81–110 (ESFRINFARCIFCGYCEEACPTSAIQLTPD). [4Fe-4S] cluster contacts are provided by Cys51, Cys54, Cys57, Cys61, Cys90, Cys93, Cys96, and Cys100.

This sequence belongs to the complex I 23 kDa subunit family. In terms of assembly, NDH-1 is composed of 14 different subunits. Subunits NuoA, H, J, K, L, M, N constitute the membrane sector of the complex. [4Fe-4S] cluster serves as cofactor.

The protein resides in the cell inner membrane. It carries out the reaction a quinone + NADH + 5 H(+)(in) = a quinol + NAD(+) + 4 H(+)(out). NDH-1 shuttles electrons from NADH, via FMN and iron-sulfur (Fe-S) centers, to quinones in the respiratory chain. The immediate electron acceptor for the enzyme in this species is believed to be ubiquinone. Couples the redox reaction to proton translocation (for every two electrons transferred, four hydrogen ions are translocated across the cytoplasmic membrane), and thus conserves the redox energy in a proton gradient. The polypeptide is NADH-quinone oxidoreductase subunit I 2 (Cereibacter sphaeroides (strain ATCC 17023 / DSM 158 / JCM 6121 / CCUG 31486 / LMG 2827 / NBRC 12203 / NCIMB 8253 / ATH 2.4.1.) (Rhodobacter sphaeroides)).